The sequence spans 383 residues: MRFLTAGESHGPELLAIIEGLPAGLPLSEEDINPWLEKRQKGYGRGRRMVIERDRVEFRAGVRGGRTTGAPVALAIKNADFKNWAEIMDPAPGNWPRKRALTAARPGHADLAGGMKYGHKDLRDVLERASARETAMRVAVGAVALKLLSLLGVEGVGYVPGMAGVWAKVPFSWDLVPRIEESPLRMTDPEAEAEAIRRIDQAKAEGDTLGGIIEARFRGLVPGLGSHVHWDRKLDGRLAQMALSIPAVKGVEIGPAFENAMKRGSEVHDAIYWSPERGFYRETNRAGGLEGGMTTGEELVVRAALKPIATLMKPLPTVDVVTHEPKDAARERSDTTAVPAASVILCALSAIVLAQAYLEKFGGDTMEEIQERVERYRERVRAY.

Residues R39 and R45 each contribute to the NADP(+) site. Residues 128 to 130 (RAS), G291, 306 to 310 (KPIAT), and R332 contribute to the FMN site.

This sequence belongs to the chorismate synthase family. As to quaternary structure, homotetramer. Requires FMNH2 as cofactor.

The enzyme catalyses 5-O-(1-carboxyvinyl)-3-phosphoshikimate = chorismate + phosphate. The protein operates within metabolic intermediate biosynthesis; chorismate biosynthesis; chorismate from D-erythrose 4-phosphate and phosphoenolpyruvate: step 7/7. Its function is as follows. Catalyzes the anti-1,4-elimination of the C-3 phosphate and the C-6 proR hydrogen from 5-enolpyruvylshikimate-3-phosphate (EPSP) to yield chorismate, which is the branch point compound that serves as the starting substrate for the three terminal pathways of aromatic amino acid biosynthesis. This reaction introduces a second double bond into the aromatic ring system. This is Chorismate synthase from Thermus thermophilus (strain ATCC BAA-163 / DSM 7039 / HB27).